Here is a 58-residue protein sequence, read N- to C-terminus: Proteinase inhibitor PSKP-1 (58 aa).

The 58-residue stretch at 1–58 folds into the Kazal-like domain; that stretch reads VIEPKCYKYEGKKCPPDINPVCGTDKRTYYNECALCVFIRQSTKKADKAIKIKKWGKC. Cystine bridges form between C6/C36, C14/C33, and C22/C58.

As to quaternary structure, monomer. In terms of tissue distribution, skin.

It localises to the secreted. Functionally, has antibacterial activity against Gram-negative bacterium E.coli ATCC 11229. Shows hemagglutinating activity. Inhibits prolyl endopeptidase, but not trypsin, chymotrypsin, V8 protease and proteinase K. May have a role in mucosal defense against microbes by interacting directly with their membranes. This is Proteinase inhibitor PSKP-1 from Phyllomedusa sauvagei (Sauvage's leaf frog).